The following is a 276-amino-acid chain: Undecaprenyl-diphosphatase (276 aa).

Helical transmembrane passes span 43–63 (RAMA…VWEF), 85–105 (ANLL…ADLI), 109–129 (LFNP…MLWA), 183–203 (AATE…AVYS), 214–234 (SDLP…MIAV), and 249–269 (FAWY…FGWV).

Belongs to the UppP family.

It is found in the cell inner membrane. It carries out the reaction di-trans,octa-cis-undecaprenyl diphosphate + H2O = di-trans,octa-cis-undecaprenyl phosphate + phosphate + H(+). Functionally, catalyzes the dephosphorylation of undecaprenyl diphosphate (UPP). Confers resistance to bacitracin. The sequence is that of Undecaprenyl-diphosphatase from Pseudomonas putida (strain W619).